A 170-amino-acid polypeptide reads, in one-letter code: MASQSTDQPKSIHDFIVKDARGNDVDLSIYKGKVLLIVNVASQCGLTNSNYPELTKLYEQYKDKGLEILAFPCNQFGNQEPGDNEQIMEFACTRFKAEFPIFDKVDVNGSNAAPVYKYLKSSKGGLFGDGIKWNFTKFLVDRDGKVVDRYAPTTSPASIEKDIKKLIGTS.

Cys-44 is an active-site residue.

It belongs to the glutathione peroxidase family.

The protein localises to the cytoplasm. The enzyme catalyses a hydroperoxy polyunsaturated fatty acid + 2 glutathione = a hydroxy polyunsaturated fatty acid + glutathione disulfide + H2O. Protects cells and enzymes from oxidative damage, by catalyzing the reduction of hydrogen peroxide, lipid peroxides and organic hydroperoxide, by glutathione. This Mesembryanthemum crystallinum (Common ice plant) protein is Probable phospholipid hydroperoxide glutathione peroxidase (GPXMC1).